Here is a 436-residue protein sequence, read N- to C-terminus: UPF0597 protein YhaM (436 aa).

It belongs to the UPF0597 family.

The chain is UPF0597 protein YhaM from Escherichia coli (strain 55989 / EAEC).